We begin with the raw amino-acid sequence, 397 residues long: DNA replication and repair protein RecF (397 aa).

Residue G30–T37 participates in ATP binding.

It belongs to the RecF family.

The protein resides in the cytoplasm. Functionally, the RecF protein is involved in DNA metabolism; it is required for DNA replication and normal SOS inducibility. RecF binds preferentially to single-stranded, linear DNA. It also seems to bind ATP. The chain is DNA replication and repair protein RecF from Beutenbergia cavernae (strain ATCC BAA-8 / DSM 12333 / CCUG 43141 / JCM 11478 / NBRC 16432 / NCIMB 13614 / HKI 0122).